The chain runs to 444 residues: ATPase PAAT (444 aa).

Phosphoserine is present on residues serine 177, serine 182, and serine 254. Residues 279-300 are disordered; sequence SAQPSGEGNTTNHDEGHLMPQN. Over residues 280 to 289 the composition is skewed to polar residues; that stretch reads AQPSGEGNTT. Phosphoserine is present on serine 302. The segment at 424–444 is disordered; sequence PPPGMPLRHYDSRERLSNGER. A compositionally biased stretch (basic and acidic residues) spans 431 to 444; it reads RHYDSRERLSNGER.

Homodimer. Interacts with ABCB7, ABCB8/MITOSUR and ABCB10.

It localises to the cytoplasm. It is found in the mitochondrion. The catalysed reaction is ATP + H2O = ADP + phosphate + H(+). In terms of biological role, ATPase that regulates mitochondrial ABC transporters ABCB7, ABCB8/MITOSUR and ABCB10. Regulates mitochondrial ferric concentration and heme biosynthesis and plays a role in the maintenance of mitochondrial homeostasis and cell survival. The polypeptide is ATPase PAAT (Mus musculus (Mouse)).